We begin with the raw amino-acid sequence, 273 residues long: Dermonecrotic toxin LsaSicTox-alphaIB1bi (273 aa).

Residue H5 is part of the active site. Mg(2+)-binding residues include E25 and D27. H41 acts as the Nucleophile in catalysis. 2 cysteine pairs are disulfide-bonded: C45–C51 and C47–C190. Residue D85 participates in Mg(2+) binding.

The protein belongs to the arthropod phospholipase D family. Class II subfamily. Requires Mg(2+) as cofactor. Expressed by the venom gland.

The protein resides in the secreted. It carries out the reaction an N-(acyl)-sphingosylphosphocholine = an N-(acyl)-sphingosyl-1,3-cyclic phosphate + choline. It catalyses the reaction an N-(acyl)-sphingosylphosphoethanolamine = an N-(acyl)-sphingosyl-1,3-cyclic phosphate + ethanolamine. The catalysed reaction is a 1-acyl-sn-glycero-3-phosphocholine = a 1-acyl-sn-glycero-2,3-cyclic phosphate + choline. The enzyme catalyses a 1-acyl-sn-glycero-3-phosphoethanolamine = a 1-acyl-sn-glycero-2,3-cyclic phosphate + ethanolamine. In terms of biological role, dermonecrotic toxins cleave the phosphodiester linkage between the phosphate and headgroup of certain phospholipids (sphingolipid and lysolipid substrates), forming an alcohol (often choline) and a cyclic phosphate. This toxin acts on sphingomyelin (SM). It may also act on ceramide phosphoethanolamine (CPE), lysophosphatidylcholine (LPC) and lysophosphatidylethanolamine (LPE), but not on lysophosphatidylserine (LPS), and lysophosphatidylglycerol (LPG). It acts by transphosphatidylation, releasing exclusively cyclic phosphate products as second products. Induces dermonecrosis, hemolysis, increased vascular permeability, edema, inflammatory response, and platelet aggregation. This Loxosceles sabina (Tucson recluse spider) protein is Dermonecrotic toxin LsaSicTox-alphaIB1bi.